Consider the following 275-residue polypeptide: Intercellular adhesion molecule 2 (275 aa).

An N-terminal signal peptide occupies residues 1–24 (MSSFSYRTLTVALFALICCPGSDE). At 25–223 (KVFEVHVRPK…EIYEPVSDSQ (199 aa)) the chain is on the extracellular side. Residues 41–98 (KGSLKVNCSTTCNQPEVGGLETSLDKILLDEQAQWKHYLVSNISHDTVLQCHFTCSGK) enclose the Ig-like C2-type 1 domain. Asn-47, Asn-82, Asn-105, Asn-153, Asn-176, and Asn-187 each carry an N-linked (GlcNAc...) asparagine glycan. Cystine bridges form between Cys-48-Cys-91 and Cys-52-Cys-95. The Ig-like C2-type 2 domain maps to 127-197 (GKSFTIECRV…FSCLAVLDLM (71 aa)). Cys-134 and Cys-190 are oxidised to a cystine. A helical membrane pass occupies residues 224–248 (MVIIVTVVSVLLSLFVTSVLLCFIF). The Cytoplasmic segment spans residues 249–275 (GQHLRQQRMGTYGVRAAWRRLPQAFRP). The segment at 251 to 275 (HLRQQRMGTYGVRAAWRRLPQAFRP) is required for interaction with EZR, MSN and RDX and co-localization to microvilli.

Belongs to the immunoglobulin superfamily. ICAM family. In terms of assembly, interacts with RDX, EZR and MSN.

The protein localises to the membrane. The protein resides in the cell projection. It localises to the microvillus. In terms of biological role, ICAM proteins are ligands for the leukocyte adhesion protein LFA-1 (integrin alpha-L/beta-2). ICAM2 may play a role in lymphocyte recirculation by blocking LFA-1-dependent cell adhesion. It mediates adhesive interactions important for antigen-specific immune response, NK-cell mediated clearance, lymphocyte recirculation, and other cellular interactions important for immune response and surveillance. The sequence is that of Intercellular adhesion molecule 2 (ICAM2) from Pan troglodytes (Chimpanzee).